Reading from the N-terminus, the 346-residue chain is MESVSCSAAPVRSGDMESQRDMSLVPERLQRREQERQLEVERRKQKRQNQEVEKENSHFFAATFARERAAVEELLERAESVERLEEAASRLQGLQKLINDSVFFLAAYDLRQGQEALARLQAALAERRRELQPKKRFAFKTRGKDAASCTKVDAAPGIPPAVESIQDSPLPKKAEGDLGSSWLCGFSNLESQVLEKRASELHQRDVLLTELSNCTVRLYGNPNTLRLTKAHSCKLLCGPVSTSVFLEDCSDCVLAVACQQLRIHSTKDTRIFLQVTSRAIVEDCSGIQFAPYTWSYPEIDKDFESSGLDRSKNNWNDVDDFNWLARDMASPNWCILPEEERNIQWD.

Methionine 1 carries the N-acetylmethionine modification. Residues 1–54 form a disordered region; sequence MESVSCSAAPVRSGDMESQRDMSLVPERLQRREQERQLEVERRKQKRQNQEVEK. Residues 28-54 show a composition bias toward basic and acidic residues; sequence RLQRREQERQLEVERRKQKRQNQEVEK. Phosphoserine occurs at positions 80 and 168. The region spanning 171 to 323 is the C-CAP/cofactor C-like domain; that stretch reads PKKAEGDLGS…NWNDVDDFNW (153 aa).

It belongs to the TBCC family. Supercomplex made of cofactors A to E. Cofactors A and D function by capturing and stabilizing tubulin in a quasi-native conformation. Cofactor E binds to the cofactor D-tubulin complex; interaction with cofactor C then causes the release of tubulin polypeptides that are committed to the native state.

Its subcellular location is the cytoplasm. Its function is as follows. Tubulin-folding protein; involved in the final step of the tubulin folding pathway. This is Tubulin-specific chaperone C (TBCC) from Pongo abelii (Sumatran orangutan).